A 510-amino-acid chain; its full sequence is Dolichyl-P-Man:Man5GlcNAc2-PP-dolichol alpha-1,3-mannosyltransferase Alg3 (510 aa).

Residues 1–43 (MAPPKAASHRPAVRRKKSGTLVDSILDKYLNVRFFKYLLLEPA) are Cytoplasmic-facing. Residues 44 to 64 (ALPIVGLFVLLAELVINVVVI) traverse the membrane as a helical segment. Over 65 to 97 (QRVPYTEIDWVAYMQECEGFLNGTTNYSLLRGD) the chain is Lumenal. Residues 98 to 118 (TGPLVYPAAFVYIYSALYYVT) traverse the membrane as a helical segment. Residues 119–125 (SHGTNVR) lie on the Cytoplasmic side of the membrane. A helical transmembrane segment spans residues 126–146 (LAQYIFAGIYLLQLALVLRLY). Topologically, residues 147 to 171 (SKSRKVPPYVLVLSAFTSYRIHSIY) are lumenal. A helical transmembrane segment spans residues 172 to 192 (VLRLFNDPVAVLLLYAALNLF). At 193-211 (LDRRWTLGSTFFSLAVGVK) the chain is on the cytoplasmic side. Residues 212-232 (MNILLFAPALLLFYLANLGLL) form a helical membrane-spanning segment. Residue Arg233 is a topological domain, lumenal. A helical membrane pass occupies residues 234–254 (TILQLAVCGVIQLLLGAPFLL). At 255–294 (THPVEYLRGSFDLGRIFEHKWTVNYRFLSRDVFENRTFHV) the chain is on the cytoplasmic side. The chain crosses the membrane as a helical span at residues 295–315 (SLLGLHLLLLLAFAKPIWTFF). The Lumenal portion of the chain corresponds to 316–403 (QSYVRLRRIE…YGIHFDRCTQ (88 aa)). The tract at residues 337-358 (LQLKAQKRPKKVEKDKDKDQKK) is disordered. The span at 348–358 (VEKDKDKDQKK) shows a compositional bias: basic and acidic residues. Residues 404 to 424 (LALLPFFLCNLVGVACSRSLH) traverse the membrane as a helical segment. The Cytoplasmic portion of the chain corresponds to 425-426 (YQ). A helical transmembrane segment spans residues 427 to 447 (FYVWYFHSLPYLAWSTPYSLG). The Lumenal portion of the chain corresponds to 448-464 (VRCLILGLIEYCWNTYP). Residues 465–485 (STNFSSAALHFTHIILLAGVA) traverse the membrane as a helical segment. Residues 486–510 (KQLIQTMRINNAAKREQQEQQKKLQ) lie on the Cytoplasmic side of the membrane.

The protein belongs to the glycosyltransferase ALG3 family.

It is found in the endoplasmic reticulum membrane. It catalyses the reaction an alpha-D-Man-(1-&gt;2)-alpha-D-Man-(1-&gt;2)-alpha-D-Man-(1-&gt;3)-[alpha-D-Man-(1-&gt;6)]-beta-D-Man-(1-&gt;4)-beta-D-GlcNAc-(1-&gt;4)-alpha-D-GlcNAc-diphospho-di-trans,poly-cis-dolichol + a di-trans,poly-cis-dolichyl beta-D-mannosyl phosphate = an alpha-D-Man-(1-&gt;2)-alpha-D-Man-(1-&gt;2)-alpha-D-Man-(1-&gt;3)-[alpha-D-Man-(1-&gt;3)-alpha-D-Man-(1-&gt;6)]-beta-D-Man-(1-&gt;4)-beta-D-GlcNAc-(1-&gt;4)-alpha-D-GlcNAc-diphospho-di-trans,poly-cis-dolichol + a di-trans,poly-cis-dolichyl phosphate + H(+). It participates in protein modification; protein glycosylation. In terms of biological role, probable alpha-1,3-mannosyltransferase involved in the N-glycosylation pathway. Involved in glycosylation of the TNF receptor grnd, regulating its ligand affinity. Required for normal epithelial growth and architecture. Suppressor of JNK-dependent intestinal stem cell proliferation. In Drosophila melanogaster (Fruit fly), this protein is Dolichyl-P-Man:Man5GlcNAc2-PP-dolichol alpha-1,3-mannosyltransferase Alg3.